The chain runs to 532 residues: Muscarinic acetylcholine receptor M5 (532 aa).

The Extracellular segment spans residues 1–29 (MEGDSYHNATTVNGTPVNHQPLERHRLWE). An N-linked (GlcNAc...) asparagine glycan is attached at Asn-8. Residues 30 to 53 (VITIAAVTAVVSLITIVGNVLVMI) traverse the membrane as a helical segment. Topologically, residues 54–66 (SFKVNSQLKTVNN) are cytoplasmic. Residues 67-87 (YYLLSLACADLIIGIFSMNLY) form a helical membrane-spanning segment. Residues 88 to 104 (TTYILMGRWALGSLACD) lie on the Extracellular side of the membrane. A disulfide bond links Cys-103 and Cys-183. Residues 105 to 126 (LWLALDYVASNASVMNLLVISF) traverse the membrane as a helical segment. Residues 127 to 146 (DRYFSITRPLTYRAKRTPKR) lie on the Cytoplasmic side of the membrane. A helical transmembrane segment spans residues 147-169 (AGIMIGLAWLISFILWAPAILCW). The Extracellular portion of the chain corresponds to 170–191 (QYLVGKRTVPLDECQIQFLSEP). The chain crosses the membrane as a helical span at residues 192 to 214 (TITFGTAIAAFYIPVSVMTILYC). Topologically, residues 215 to 443 (RIYRETEKRT…LVKERKAAQT (229 aa)) are cytoplasmic. Positions 262–294 (AQRERNQASWSSSRRSTSTTGKPSQATGPSANW) are disordered. A compositionally biased stretch (low complexity) spans 270 to 281 (SWSSSRRSTSTT). Over residues 282–291 (GKPSQATGPS) the composition is skewed to polar residues. A helical membrane pass occupies residues 444–464 (LSAILLAFIITWTPYNIMVLV). Over 465 to 478 (STFCDKCVPVTLWH) the chain is Extracellular. Residues 479-498 (LGYWLCYVNSTVNPICYALC) traverse the membrane as a helical segment. The Cytoplasmic segment spans residues 499 to 532 (NRTFRKTFKMLLLCRWKKKKVEEKLYWQGNSKLP). 2 positions are modified to phosphothreonine: Thr-501 and Thr-505.

The protein belongs to the G-protein coupled receptor 1 family. Muscarinic acetylcholine receptor subfamily. CHRM5 sub-subfamily.

The protein resides in the cell membrane. The protein localises to the postsynaptic cell membrane. Functionally, the muscarinic acetylcholine receptor mediates various cellular responses, including inhibition of adenylate cyclase, breakdown of phosphoinositides and modulation of potassium channels through the action of G proteins. Primary transducing effect is Pi turnover. The polypeptide is Muscarinic acetylcholine receptor M5 (CHRM5) (Homo sapiens (Human)).